The chain runs to 327 residues: Complex I intermediate-associated protein 30, mitochondrial (327 aa).

A mitochondrion-targeting transit peptide spans 1-24; it reads MALVHKLLRDTYILRKFSKPTSAL. Residues 42-63 are disordered; sequence PVASPGKASSQRKTEGDLQGDH. The span at 53-63 shows a compositional bias: basic and acidic residues; the sequence is RKTEGDLQGDH. At S318 the chain carries Phosphoserine.

The protein belongs to the CIA30 family. As to quaternary structure, part of the mitochondrial complex I assembly/MCIA complex that comprises at least the core subunits TMEM126B, NDUFAF1, ECSIT and ACAD9 and complement subunits such as COA1 and TMEM186. Interacts with ECSIT. Interacts with ACAD9. At early stages of complex I assembly, it is found in intermediate subcomplexes that contain different subunits including NDUFB6, NDUFA6, NDUFA9, NDUFS3, NDUFS7, ND1, ND2 and ND3. Interacts with TMEM70 and TMEM242.

Its subcellular location is the mitochondrion. It localises to the mitochondrion matrix. Functionally, as part of the MCIA complex, involved in the assembly of the mitochondrial complex I. The sequence is that of Complex I intermediate-associated protein 30, mitochondrial from Gorilla gorilla gorilla (Western lowland gorilla).